We begin with the raw amino-acid sequence, 335 residues long: 2,4-dienoyl-CoA reductase [(3E)-enoyl-CoA-producing], mitochondrial (335 aa).

Residues 1-34 constitute a mitochondrion transit peptide; that stretch reads MKLPARVFFTLGSRLPCGLAPRRFFSYGTKILYQ. K42 and K49 each carry N6-acetyllysine; alternate. 2 positions are modified to N6-succinyllysine; alternate: K42 and K49. 66–71 serves as a coordination point for NADP(+); that stretch reads GGGTGL. A Phosphothreonine modification is found at T69. K73 bears the N6-succinyllysine mark. An NADP(+)-binding site is contributed by R91. R91 contributes to the substrate binding site. Residue K97 is modified to N6-acetyllysine; alternate. K97 carries the post-translational modification N6-succinyllysine; alternate. An NADP(+)-binding site is contributed by D117. R119, F149, and S157 together coordinate substrate. Y199 serves as the catalytic Proton acceptor. K214 is a binding site for NADP(+). N6-acetyllysine is present on K230. Residue 240 to 243 coordinates NADP(+); that stretch reads PGPI. K244 is subject to N6-acetyllysine; alternate. K244 bears the N6-succinyllysine; alternate mark. R251 is a binding site for substrate. 2 positions are modified to N6-acetyllysine; alternate: K260 and K319. An N6-succinyllysine; alternate mark is found at K260 and K319.

Belongs to the short-chain dehydrogenases/reductases (SDR) family. 2,4-dienoyl-CoA reductase subfamily. Homotetramer. Heart = liver = pancreas &gt; kidney &gt;&gt; skeletal muscle = lung.

The protein localises to the mitochondrion. It carries out the reaction a (2E,4E)-dienoyl-CoA + NADPH + H(+) = a 4,5-saturated-(3E)-enoyl-CoA + NADP(+). The catalysed reaction is a (2E,4Z)-dienoyl-CoA + NADPH + H(+) = a 4,5-saturated-(3E)-enoyl-CoA + NADP(+). It catalyses the reaction (2E,4E)-hexadienoyl-CoA + NADPH + H(+) = (3E)-hexenoyl-CoA + NADP(+). Auxiliary enzyme of beta-oxidation. It participates in the metabolism of unsaturated fatty enoyl-CoA esters having double bonds in both even- and odd-numbered positions in mitochondria. Catalyzes the NADP-dependent reduction of 2,4-dienoyl-CoA to yield trans-3-enoyl-CoA. This chain is 2,4-dienoyl-CoA reductase [(3E)-enoyl-CoA-producing], mitochondrial (DECR1), found in Homo sapiens (Human).